Consider the following 164-residue polypeptide: Protein-export protein SecB (164 aa).

The protein belongs to the SecB family. As to quaternary structure, homotetramer, a dimer of dimers. One homotetramer interacts with 1 SecA dimer.

The protein localises to the cytoplasm. Functionally, one of the proteins required for the normal export of preproteins out of the cell cytoplasm. It is a molecular chaperone that binds to a subset of precursor proteins, maintaining them in a translocation-competent state. It also specifically binds to its receptor SecA. The polypeptide is Protein-export protein SecB (Zymomonas mobilis subsp. mobilis (strain ATCC 31821 / ZM4 / CP4)).